Consider the following 96-residue polypeptide: Ferredoxin-1 (96 aa).

The region spanning 1–95 (MKVIINGKEF…DCDEIVIESE (95 aa)) is the 2Fe-2S ferredoxin-type domain. [2Fe-2S] cluster is bound by residues cysteine 34, cysteine 39, cysteine 42, and cysteine 78. Cysteine 52 and cysteine 87 are joined by a disulfide.

Belongs to the 2Fe2S plant-type ferredoxin family. It depends on [2Fe-2S] cluster as a cofactor.

Its function is as follows. Ferredoxins are iron-sulfur proteins that transfer electrons in a wide variety of metabolic reactions. In Aquifex aeolicus (strain VF5), this protein is Ferredoxin-1 (fdx1).